Here is a 260-residue protein sequence, read N- to C-terminus: Ras-related protein Rab-26 (260 aa).

Residues 1–56 (MSRKKTPKSKGGSEPATSTLPAAAAATNGPRLAHPRTVRPGPEAPPNGPPQSIRPS) form a disordered region. GTP is bound by residues Ser-76, Gly-77, Val-78, Gly-79, Lys-80, Thr-81, Cys-82, Ser-99, and Thr-100. Mg(2+) is bound at residue Thr-81. Short sequence motifs (switch) lie at residues 90–105 (GAFL…GIDF) and 123–140 (DTAG…YYRD). 2 residues coordinate Mg(2+): Thr-100 and Asp-123. 6 residues coordinate GTP: Gly-126, Asn-181, Lys-182, Asp-184, Ala-212, and Arg-213. Residues Cys-257 and Cys-258 are each lipidated (S-geranylgeranyl cysteine).

It belongs to the small GTPase superfamily. Rab family. In terms of assembly, interacts with ADRA2B. Interacts with RIMS1. It depends on Mg(2+) as a cofactor. Detected in zymogenic cells in the stomach.

It localises to the cytoplasmic vesicle. The protein localises to the secretory vesicle membrane. The protein resides in the golgi apparatus membrane. The catalysed reaction is GTP + H2O = GDP + phosphate + H(+). Regulated by guanine nucleotide exchange factors (GEFs) which promote the exchange of bound GDP for free GTP. Regulated by GTPase activating proteins (GAPs) which increase the GTP hydrolysis activity. Inhibited by GDP dissociation inhibitors (GDIs). The small GTPases Rab are key regulators of intracellular membrane trafficking, from the formation of transport vesicles to their fusion with membranes. Rabs cycle between an inactive GDP-bound form and an active GTP-bound form that is able to recruit to membranes different set of downstream effectors directly responsible for vesicle formation, movement, tethering and fusion. RAB26 mediates transport of ADRA2A and ADRA2B from the Golgi to the cell membrane. Plays a role in the maturation of zymogenic granules and in pepsinogen secretion in the stomach. Plays a role in the secretion of amylase from acinar granules in the parotid gland. In Mus musculus (Mouse), this protein is Ras-related protein Rab-26.